A 43-amino-acid chain; its full sequence is Protein PsbN (43 aa).

A helical transmembrane segment spans residues 5 to 27 (TLVTISISCLLVSFTGYAIYTSF).

Belongs to the PsbN family.

Its subcellular location is the plastid. The protein localises to the chloroplast thylakoid membrane. May play a role in photosystem I and II biogenesis. The chain is Protein PsbN from Welwitschia mirabilis (Tree tumbo).